A 131-amino-acid chain; its full sequence is D-ribose pyranase (131 aa).

The Proton donor role is filled by His20. Substrate-binding positions include Asp28, His98, and 120-122 (YSN).

It belongs to the RbsD / FucU family. RbsD subfamily. In terms of assembly, homodecamer.

It localises to the cytoplasm. It catalyses the reaction beta-D-ribopyranose = beta-D-ribofuranose. Its pathway is carbohydrate metabolism; D-ribose degradation; D-ribose 5-phosphate from beta-D-ribopyranose: step 1/2. Functionally, catalyzes the interconversion of beta-pyran and beta-furan forms of D-ribose. The sequence is that of D-ribose pyranase from Latilactobacillus sakei subsp. sakei (strain 23K) (Lactobacillus sakei subsp. sakei).